A 214-amino-acid polypeptide reads, in one-letter code: Adenylate kinase (214 aa).

ATP is bound at residue 10–15; it reads GAGKGT. The NMP stretch occupies residues 30-59; the sequence is STGDMLRAAIKAGSELGQKAKILMDMGQLV. AMP is bound by residues T31, R36, 57-59, 85-88, and Q92; these read QLV and GFPR. Residues 122–159 are LID; sequence GRRVHPASGRTYHIVYNPPKVEDKDDITGEDLILRADD. ATP-binding positions include R123 and 132 to 133; that span reads TY. R156 and R167 together coordinate AMP. Position 200 (Q200) interacts with ATP.

Belongs to the adenylate kinase family. In terms of assembly, monomer.

It localises to the cytoplasm. The catalysed reaction is AMP + ATP = 2 ADP. It functions in the pathway purine metabolism; AMP biosynthesis via salvage pathway; AMP from ADP: step 1/1. Functionally, catalyzes the reversible transfer of the terminal phosphate group between ATP and AMP. Plays an important role in cellular energy homeostasis and in adenine nucleotide metabolism. In Histophilus somni (strain 129Pt) (Haemophilus somnus), this protein is Adenylate kinase.